We begin with the raw amino-acid sequence, 209 residues long: Thiamine-phosphate synthase (209 aa).

Residues 32–36 (QLRMK) and Asp64 contribute to the 4-amino-2-methyl-5-(diphosphooxymethyl)pyrimidine site. 2 residues coordinate Mg(2+): Asp65 and Asp84. Thr103 is a 4-amino-2-methyl-5-(diphosphooxymethyl)pyrimidine binding site. 129–131 (TTT) serves as a coordination point for 2-[(2R,5Z)-2-carboxy-4-methylthiazol-5(2H)-ylidene]ethyl phosphate. Residue Lys132 coordinates 4-amino-2-methyl-5-(diphosphooxymethyl)pyrimidine. Gly165 serves as a coordination point for 2-[(2R,5Z)-2-carboxy-4-methylthiazol-5(2H)-ylidene]ethyl phosphate.

This sequence belongs to the thiamine-phosphate synthase family. Requires Mg(2+) as cofactor.

The catalysed reaction is 2-[(2R,5Z)-2-carboxy-4-methylthiazol-5(2H)-ylidene]ethyl phosphate + 4-amino-2-methyl-5-(diphosphooxymethyl)pyrimidine + 2 H(+) = thiamine phosphate + CO2 + diphosphate. The enzyme catalyses 2-(2-carboxy-4-methylthiazol-5-yl)ethyl phosphate + 4-amino-2-methyl-5-(diphosphooxymethyl)pyrimidine + 2 H(+) = thiamine phosphate + CO2 + diphosphate. It catalyses the reaction 4-methyl-5-(2-phosphooxyethyl)-thiazole + 4-amino-2-methyl-5-(diphosphooxymethyl)pyrimidine + H(+) = thiamine phosphate + diphosphate. Its pathway is cofactor biosynthesis; thiamine diphosphate biosynthesis; thiamine phosphate from 4-amino-2-methyl-5-diphosphomethylpyrimidine and 4-methyl-5-(2-phosphoethyl)-thiazole: step 1/1. Its function is as follows. Condenses 4-methyl-5-(beta-hydroxyethyl)thiazole monophosphate (THZ-P) and 2-methyl-4-amino-5-hydroxymethyl pyrimidine pyrophosphate (HMP-PP) to form thiamine monophosphate (TMP). The sequence is that of Thiamine-phosphate synthase from Bacteroides thetaiotaomicron (strain ATCC 29148 / DSM 2079 / JCM 5827 / CCUG 10774 / NCTC 10582 / VPI-5482 / E50).